The sequence spans 292 residues: Elongation factor Ts (292 aa).

The tract at residues 80-83 (TDFV) is involved in Mg(2+) ion dislocation from EF-Tu.

This sequence belongs to the EF-Ts family.

Its subcellular location is the cytoplasm. In terms of biological role, associates with the EF-Tu.GDP complex and induces the exchange of GDP to GTP. It remains bound to the aminoacyl-tRNA.EF-Tu.GTP complex up to the GTP hydrolysis stage on the ribosome. The chain is Elongation factor Ts from Cupriavidus metallidurans (strain ATCC 43123 / DSM 2839 / NBRC 102507 / CH34) (Ralstonia metallidurans).